Consider the following 388-residue polypeptide: Phosphopentomutase (388 aa).

Residues D10, D282, H287, D323, H324, and H335 each contribute to the Mn(2+) site.

The protein belongs to the phosphopentomutase family. Requires Mn(2+) as cofactor.

It is found in the cytoplasm. It catalyses the reaction 2-deoxy-alpha-D-ribose 1-phosphate = 2-deoxy-D-ribose 5-phosphate. The enzyme catalyses alpha-D-ribose 1-phosphate = D-ribose 5-phosphate. Its pathway is carbohydrate degradation; 2-deoxy-D-ribose 1-phosphate degradation; D-glyceraldehyde 3-phosphate and acetaldehyde from 2-deoxy-alpha-D-ribose 1-phosphate: step 1/2. Functionally, isomerase that catalyzes the conversion of deoxy-ribose 1-phosphate (dRib-1-P) and ribose 1-phosphate (Rib-1-P) to deoxy-ribose 5-phosphate (dRib-5-P) and ribose 5-phosphate (Rib-5-P), respectively. The protein is Phosphopentomutase of Carboxydothermus hydrogenoformans (strain ATCC BAA-161 / DSM 6008 / Z-2901).